Reading from the N-terminus, the 158-residue chain is Small ribosomal subunit protein uS7 (158 aa).

The protein belongs to the universal ribosomal protein uS7 family. As to quaternary structure, part of the 30S ribosomal subunit. Contacts proteins S9 and S11.

One of the primary rRNA binding proteins, it binds directly to 16S rRNA where it nucleates assembly of the head domain of the 30S subunit. Is located at the subunit interface close to the decoding center, probably blocks exit of the E-site tRNA. The protein is Small ribosomal subunit protein uS7 of Acidiphilium cryptum (strain JF-5).